The sequence spans 661 residues: Heme transporter BhuA (661 aa).

The signal sequence occupies residues 1-23 (MKFTRTLVLASTSLLATVATSQA). In terms of domain architecture, TBDR plug spans 48 to 159 (KDNIEATGGT…AAGAIRYETV (112 aa)). One can recognise a TBDR beta-barrel domain in the interval 170-661 (TFGARIIGSY…TFTFQTAFKF (492 aa)).

Belongs to the TonB-dependent receptor family.

It localises to the cell outer membrane. Its function is as follows. Heme transporter. The polypeptide is Heme transporter BhuA (bhuA) (Brucella ovis (strain ATCC 25840 / 63/290 / NCTC 10512)).